The primary structure comprises 270 residues: Catechol 1,2-dioxygenase (270 aa).

Fe cation-binding residues include Tyr152, Tyr186, His210, and His212.

Belongs to the intradiol ring-cleavage dioxygenase family. Fe(3+) serves as cofactor.

It catalyses the reaction catechol + O2 = cis,cis-muconate + 2 H(+). This is Catechol 1,2-dioxygenase (catA) from Rhodococcus opacus (Nocardia opaca).